The sequence spans 207 residues: Fibroblast growth factor 18 (207 aa).

A signal peptide spans 1-27; it reads MYSAPSACTCLCLHFLLLCFQVQVLAA. A glycan (N-linked (GlcNAc...) asparagine) is linked at N39. C109 and C127 form a disulfide bridge. N137 carries N-linked (GlcNAc...) asparagine glycosylation.

This sequence belongs to the heparin-binding growth factors family. Interacts with FGFR3 and FGFR4.

It localises to the secreted. Plays an important role in the regulation of cell proliferation, cell differentiation and cell migration. Required for normal ossification and bone development. Stimulates hepatic and intestinal proliferation. This is Fibroblast growth factor 18 (Fgf18) from Mus musculus (Mouse).